We begin with the raw amino-acid sequence, 321 residues long: Probable E3 ubiquitin-protein ligase BAH1-like 1 (321 aa).

Residues 1-149 form the SPX domain; the sequence is MKFAKKYEKY…YSKQGQEFKA (149 aa). The segment at 217–266 adopts an RING-type zinc-finger fold; sequence CSICLDTVFDPVALSCGHIYCYLCSCSAASVTIVDGLKSAERKSKCPLCR.

Belongs to the RING-type zinc finger family.

It catalyses the reaction S-ubiquitinyl-[E2 ubiquitin-conjugating enzyme]-L-cysteine + [acceptor protein]-L-lysine = [E2 ubiquitin-conjugating enzyme]-L-cysteine + N(6)-ubiquitinyl-[acceptor protein]-L-lysine.. Its pathway is protein modification; protein ubiquitination. This chain is Probable E3 ubiquitin-protein ligase BAH1-like 1, found in Oryza sativa subsp. indica (Rice).